The primary structure comprises 216 residues: Flavin prenyltransferase UbiX (216 aa).

FMN is bound by residues 9–11 (GAS), S35, and R144. The dimethylallyl phosphate site is built by Y174 and R190.

The protein belongs to the UbiX/PAD1 family.

The enzyme catalyses dimethylallyl phosphate + FMNH2 = prenylated FMNH2 + phosphate. Its function is as follows. Flavin prenyltransferase that catalyzes the synthesis of the prenylated FMN cofactor (prenyl-FMN) for 4-hydroxy-3-polyprenylbenzoic acid decarboxylase UbiD. The prenyltransferase is metal-independent and links a dimethylallyl moiety from dimethylallyl monophosphate (DMAP) to the flavin N5 and C6 atoms of FMN. In Streptomyces coelicolor (strain ATCC BAA-471 / A3(2) / M145), this protein is Flavin prenyltransferase UbiX.